The following is a 503-amino-acid chain: Probable cytosol aminopeptidase (503 aa).

Residues Lys-270 and Asp-275 each coordinate Mn(2+). The active site involves Lys-282. Mn(2+) contacts are provided by Asp-293, Asp-352, and Glu-354. The active site involves Arg-356.

Belongs to the peptidase M17 family. The cofactor is Mn(2+).

It localises to the cytoplasm. It catalyses the reaction Release of an N-terminal amino acid, Xaa-|-Yaa-, in which Xaa is preferably Leu, but may be other amino acids including Pro although not Arg or Lys, and Yaa may be Pro. Amino acid amides and methyl esters are also readily hydrolyzed, but rates on arylamides are exceedingly low.. The catalysed reaction is Release of an N-terminal amino acid, preferentially leucine, but not glutamic or aspartic acids.. Functionally, presumably involved in the processing and regular turnover of intracellular proteins. Catalyzes the removal of unsubstituted N-terminal amino acids from various peptides. The sequence is that of Probable cytosol aminopeptidase from Salmonella agona (strain SL483).